A 189-amino-acid polypeptide reads, in one-letter code: MASLYLLLLLPLFLALILAATITESKSFSTTVKAPYPGHKPDKLTHLHFYFHDIVSGDKPTSVQVANGPTTNSSATGFGLVAVVDDKLTVGPEITSEEVGRAQGMYASADQNKLGLLMAFNLVFTKGKFSDSTVAMYGRNPVLSKVREMPIIGGTGAFRFGRGYALAKTLVFNITSGDAVVEYNVYIWH.

The first 19 residues, 1–19 (MASLYLLLLLPLFLALILA), serve as a signal peptide directing secretion. N-linked (GlcNAc...) asparagine glycans are attached at residues Asn-72 and Asn-173.

The protein belongs to the plant dirigent protein family. In terms of assembly, homodimer.

It localises to the secreted. Its function is as follows. Dirigent proteins impart stereoselectivity on the phenoxy radical-coupling reaction, yielding optically active lignans from two molecules of coniferyl alcohol in the biosynthesis of lignans, flavonolignans, and alkaloids and thus plays a central role in plant secondary metabolism. The sequence is that of Dirigent protein 21 (DIR21) from Arabidopsis thaliana (Mouse-ear cress).